The chain runs to 165 residues: Methylated-DNA--protein-cysteine methyltransferase (165 aa).

Residue Cys-126 is the Nucleophile; methyl group acceptor of the active site.

The protein belongs to the MGMT family.

It localises to the cytoplasm. It catalyses the reaction a 6-O-methyl-2'-deoxyguanosine in DNA + L-cysteinyl-[protein] = S-methyl-L-cysteinyl-[protein] + a 2'-deoxyguanosine in DNA. It carries out the reaction a 4-O-methyl-thymidine in DNA + L-cysteinyl-[protein] = a thymidine in DNA + S-methyl-L-cysteinyl-[protein]. Functionally, involved in the cellular defense against the biological effects of O6-methylguanine (O6-MeG) and O4-methylthymine (O4-MeT) in DNA. Repairs the methylated nucleobase in DNA by stoichiometrically transferring the methyl group to a cysteine residue in the enzyme. This is a suicide reaction: the enzyme is irreversibly inactivated. The chain is Methylated-DNA--protein-cysteine methyltransferase from Mycobacterium leprae (strain TN).